The following is a 202-amino-acid chain: Casparian strip membrane protein 4 (202 aa).

The Cytoplasmic segment spans residues 1–40 (MKSDSIAVDVPAESSSAIKGKAPLLGLARDHTGSGGYKRG). The chain crosses the membrane as a helical span at residues 41 to 61 (LSIFDFLLRLAAIVAALAAAA). The Extracellular segment spans residues 62-90 (TMGTSDETLPFFTQFLQFEASYDDLPTFQ). Residues 91 to 111 (FFVVAIAIVTGYLVLSLPFSV) traverse the membrane as a helical segment. Topologically, residues 112–130 (VTIVRPLAVAPRLLLLVLD) are cytoplasmic. A helical membrane pass occupies residues 131 to 151 (TAALALDTAAASAAAAIVYLA). The Extracellular segment spans residues 152 to 176 (HNGNTNTNWLPICQQFGDFCQKTSG). Residues 177 to 197 (AVVSAFASVTFLAILVVISGV) form a helical membrane-spanning segment. Residues 198 to 202 (SLKRP) lie on the Cytoplasmic side of the membrane.

The protein belongs to the Casparian strip membrane proteins (CASP) family. In terms of assembly, homodimer and heterodimers.

The protein localises to the cell membrane. In terms of biological role, regulates membrane-cell wall junctions and localized cell wall deposition. Required for establishment of the Casparian strip membrane domain (CSD) and the subsequent formation of Casparian strips, a cell wall modification of the root endodermis that determines an apoplastic barrier between the intraorganismal apoplasm and the extraorganismal apoplasm and prevents lateral diffusion. The protein is Casparian strip membrane protein 4 of Arabidopsis lyrata subsp. lyrata (Lyre-leaved rock-cress).